The sequence spans 213 residues: Dimethylamine corrinoid protein (213 aa).

The region spanning 1-90 (MSKEELLQEL…LMPEGASGSK (90 aa)) is the B12-binding N-terminal domain. The B12-binding domain occupies 91-213 (LGVIVNGTVE…AVAKAKELLA (123 aa)). A methylcob(III)alamin-binding site is contributed by H104.

This sequence belongs to the methylamine corrinoid protein family. As to quaternary structure, copurifies with MtbA.

It participates in one-carbon metabolism; methanogenesis from dimethylamine. Its function is as follows. Acts as a methyl group carrier between MtbB1 and MtbA. Binds 1 corrinoid cofactor per protein, is subsequently demethylated by MtbA. This is Dimethylamine corrinoid protein from Methanosarcina barkeri.